We begin with the raw amino-acid sequence, 490 residues long: MQTTTLNWDTVYAVPIDIVNEAIKFKHPTPEQFELLDGKYGDCKGSFQEWQIISGGDGGNIRLKIPIKNFKANVIGKYLSGTGGFESANLEIQVKLKYLPHFPKSKNKNEELVDLKIRTKSNNAEDPAIIIIPTSEDVKGFYFNEDVRSLLMTEDDQFIMNYFHRLIKEWLERNLYFFNYVFNTVNLNLYISNNEKWKWTKPSYVDYAYSEIDEDLSKSILGVLCMTDGRKGSKNQQQKIDPNAIPKTSQSGFLISEDRLLKNILLPTIPKKFPKSKGDEFEVVNQSAQGGTYSYILKLKEGKKINLDNINACGYTCTPYIQEMKVSLLGNYLRLESTTRVDLPLGVSSICETMCEYRFKLDKNDKGEQTIAYEQIGSPTNKQYTEKTQDVSFEIIKGLLIATLGFVLELVPGIGSFLAVALIGGTLVGSISLIPNFIENYNVNTAPSIDLSLENSVSEITWNSSDIFNLNYVALAGPLQLGGTLQVQNT.

This sequence belongs to the TULIP P47 family. In terms of assembly, part of a crude toxin extract that includes BoNTA2/NTNH, P47, OrfX2 and OrfX3; OrfX1 was not detected. Shorter forms of this protein are seen in vivo.

In terms of biological role, part of a botulinum neurotoxin type A2 (BoNT) locus; may be part of a progenitor toxin complex required to protect BoNT during its passage through the host gastrointestinal tract. The protein is Protein OrfX3 (orfX3) of Clostridium botulinum (strain Kyoto / Type A2).